The sequence spans 312 residues: D-alanine--D-alanine ligase (312 aa).

An ATP-grasp domain is found at 102 to 307 (KKIFKMEGIP…FPELTDRLIK (206 aa)). 136–191 (IKEVGVPAVVKANTQGSTIGITFVHVKEKMAEAIESALKYDQDVLVEQFVAGTEVT) is a binding site for ATP. Positions 262, 274, and 276 each coordinate Mg(2+).

This sequence belongs to the D-alanine--D-alanine ligase family. Mg(2+) is required as a cofactor. The cofactor is Mn(2+).

It is found in the cytoplasm. It catalyses the reaction 2 D-alanine + ATP = D-alanyl-D-alanine + ADP + phosphate + H(+). Its pathway is cell wall biogenesis; peptidoglycan biosynthesis. Functionally, cell wall formation. This chain is D-alanine--D-alanine ligase, found in Desulforamulus reducens (strain ATCC BAA-1160 / DSM 100696 / MI-1) (Desulfotomaculum reducens).